The sequence spans 110 residues: UPF0060 membrane protein BPSL1340 (110 aa).

The next 4 membrane-spanning stretches (helical) occupy residues 9 to 29 (ALFV…WLVL), 34 to 54 (PAWL…LLTL), 64 to 84 (AAYG…VDGV), and 86 to 106 (LSRW…VIAL).

This sequence belongs to the UPF0060 family.

The protein localises to the cell inner membrane. The protein is UPF0060 membrane protein BPSL1340 of Burkholderia pseudomallei (strain K96243).